The sequence spans 372 residues: Peptidyl-prolyl cis-trans isomerase D (372 aa).

In terms of domain architecture, PPIase cyclophilin-type spans 9–175 (FFDISIGGKP…KEVKIEDCGV (167 aa)). 3 TPR repeats span residues 220 to 253 (VEAVKEIGTKQFKEKNFEVALVKYEKSSQMLKQY), 271 to 304 (VSLFLNIALVSLKSKNYSRTLSAATEALHADNTD), and 309 to 342 (AKALYRRGLAYYYTKNAEMAVTDLELATTYQPHD).

The protein belongs to the cyclophilin-type PPIase family. PPIase D subfamily.

The protein resides in the cytoplasm. The catalysed reaction is [protein]-peptidylproline (omega=180) = [protein]-peptidylproline (omega=0). Its function is as follows. PPIases accelerate the folding of proteins. It catalyzes the cis-trans isomerization of proline imidic peptide bonds in oligopeptides. The protein is Peptidyl-prolyl cis-trans isomerase D (CPR6) of Kluyveromyces lactis (strain ATCC 8585 / CBS 2359 / DSM 70799 / NBRC 1267 / NRRL Y-1140 / WM37) (Yeast).